Consider the following 381-residue polypeptide: tRNA pseudouridine synthase D (381 aa).

The active-site Nucleophile is the aspartate 81. Residues 160–335 (GMPNYFGSQR…TLGSRRFFWV (176 aa)) enclose the TRUD domain.

The protein belongs to the pseudouridine synthase TruD family.

The enzyme catalyses uridine(13) in tRNA = pseudouridine(13) in tRNA. Responsible for synthesis of pseudouridine from uracil-13 in transfer RNAs. This is tRNA pseudouridine synthase D from Helicobacter pylori (strain G27).